The chain runs to 208 residues: Proheparin-binding EGF-like growth factor (208 aa).

The N-terminal stretch at 1-23 (MKLLPSVVLKLFLAAVLSALVTG) is a signal peptide. A propeptide spanning residues 24–62 (ESLERLRRGLAAATSNPDPPTGTTNQLLPTGADRAQEVQ) is cleaved from the precursor. Residues 24–160 (ESLERLRRGL…ENPLYTYDHT (137 aa)) lie on the Extracellular side of the membrane. The disordered stretch occupies residues 82–103 (ALATPGKEKNGKKKRKGKGLGK). T85 carries an O-linked (GalNAc...) threonine glycan. A compositionally biased stretch (basic residues) spans 91–102 (NGKKKRKGKGLG). The 41-residue stretch at 104–144 (KRDPCLKKYKDYCIHGECRYLKELRIPSCHCLPGYHGQRCH) folds into the EGF-like domain. Cystine bridges form between C108-C121, C116-C132, and C134-C143. A propeptide spans 149-208 (PVENPLYTYDHTTVLAVVAVVLSSVCLLVIVGLLMFRYHRRGGYDLESEEKVKLGMASSH) (C-terminal). The helical transmembrane segment at 161 to 184 (TVLAVVAVVLSSVCLLVIVGLLMF) threads the bilayer. Residues 185-208 (RYHRRGGYDLESEEKVKLGMASSH) are Cytoplasmic-facing.

Interacts with FBLN1. Interacts with EGFR and ERBB4. O-glycosylated. Most abundant in skeletal muscle, lung, spleen brain and heart.

The protein localises to the secreted. Its subcellular location is the extracellular space. The protein resides in the cell membrane. In terms of biological role, growth factor that mediates its effects via EGFR, ERBB2 and ERBB4. Required for normal cardiac valve formation and normal heart function. Promotes smooth muscle cell proliferation. May be involved in macrophage-mediated cellular proliferation. It is mitogenic for fibroblasts, but not endothelial cells. It is able to bind EGF receptor/EGFR with higher affinity than EGF itself and is a far more potent mitogen for smooth muscle cells than EGF. Also acts as a diphtheria toxin receptor. This chain is Proheparin-binding EGF-like growth factor (Hbegf), found in Rattus norvegicus (Rat).